The chain runs to 364 residues: Probable protein phosphatase methylesterase 1 (364 aa).

A disordered region spans residues 1–53 (MSDDKLDTLPDLQSETSHVTTPHRQNDLLRQAVTHGRPPPVPSTSTSGKKREM). A compositionally biased stretch (polar residues) spans 11-23 (DLQSETSHVTTPH). Catalysis depends on residues Ser164, Asp190, and His316.

This sequence belongs to the AB hydrolase superfamily.

The catalysed reaction is [phosphatase 2A protein]-C-terminal L-leucine methyl ester + H2O = [phosphatase 2A protein]-C-terminal L-leucine + methanol + H(+). Functionally, demethylates proteins that have been reversibly carboxymethylated. The polypeptide is Probable protein phosphatase methylesterase 1 (Caenorhabditis elegans).